Here is a 180-residue protein sequence, read N- to C-terminus: Adenine phosphoribosyltransferase (180 aa).

S2 carries the N-acetylserine modification. Phosphoserine is present on residues S15 and S30. Y60 is modified (phosphotyrosine). S66 carries the phosphoserine modification. An N6-acetyllysine modification is found at K114. T135 carries the post-translational modification Phosphothreonine.

The protein belongs to the purine/pyrimidine phosphoribosyltransferase family. In terms of assembly, homodimer.

It is found in the cytoplasm. The catalysed reaction is AMP + diphosphate = 5-phospho-alpha-D-ribose 1-diphosphate + adenine. The protein operates within purine metabolism; AMP biosynthesis via salvage pathway; AMP from adenine: step 1/1. In terms of biological role, catalyzes a salvage reaction resulting in the formation of AMP, that is energically less costly than de novo synthesis. The sequence is that of Adenine phosphoribosyltransferase from Mus musculus (Mouse).